Here is a 425-residue protein sequence, read N- to C-terminus: Bifunctional phosphoribosylaminoimidazole carboxylase/phosphoribosylaminoimidazole succinocarboxamide synthetase (425 aa).

N-acetylalanine is present on alanine 2. The SAICAR synthetase domain stretch occupies residues 2–260 (ATAEVLNIGK…WVAERVELLL (259 aa)). Tyrosine 22 is modified (phosphotyrosine). At serine 27 the chain carries Phosphoserine. At lysine 36 the chain carries N6-acetyllysine. Position 107 is a phosphoserine (serine 107). The residue at position 238 (threonine 238) is a Phosphothreonine. Residue lysine 247 is modified to N6-acetyllysine. Residues 261–266 (KSESQC) are linker. The interval 267 to 425 (RVVVLMGSTS…ADKKIRECNL (159 aa)) is AIR carboxylase domain. Position 274 is a phosphoserine (serine 274). Serine 332 contributes to the CO2 binding site.

It in the N-terminal section; belongs to the SAICAR synthetase family. The protein in the C-terminal section; belongs to the AIR carboxylase family. Class II subfamily. In terms of assembly, homooctamer.

It carries out the reaction 5-amino-1-(5-phospho-D-ribosyl)imidazole-4-carboxylate + L-aspartate + ATP = (2S)-2-[5-amino-1-(5-phospho-beta-D-ribosyl)imidazole-4-carboxamido]succinate + ADP + phosphate + 2 H(+). The catalysed reaction is 5-amino-1-(5-phospho-D-ribosyl)imidazole-4-carboxylate + H(+) = 5-amino-1-(5-phospho-beta-D-ribosyl)imidazole + CO2. It functions in the pathway purine metabolism; IMP biosynthesis via de novo pathway; 5-amino-1-(5-phospho-D-ribosyl)imidazole-4-carboxamide from 5-amino-1-(5-phospho-D-ribosyl)imidazole-4-carboxylate: step 1/2. Its pathway is purine metabolism; IMP biosynthesis via de novo pathway; 5-amino-1-(5-phospho-D-ribosyl)imidazole-4-carboxylate from 5-amino-1-(5-phospho-D-ribosyl)imidazole (carboxylase route): step 1/1. Its function is as follows. Bifunctional phosphoribosylaminoimidazole carboxylase and phosphoribosylaminoimidazole succinocarboxamide synthetase catalyzing two reactions of the de novo purine biosynthetic pathway. This chain is Bifunctional phosphoribosylaminoimidazole carboxylase/phosphoribosylaminoimidazole succinocarboxamide synthetase, found in Homo sapiens (Human).